We begin with the raw amino-acid sequence, 179 residues long: Large ribosomal subunit protein uL5 (179 aa).

This sequence belongs to the universal ribosomal protein uL5 family. In terms of assembly, part of the 50S ribosomal subunit; part of the 5S rRNA/L5/L18/L25 subcomplex. Contacts the 5S rRNA and the P site tRNA. Forms a bridge to the 30S subunit in the 70S ribosome.

This is one of the proteins that bind and probably mediate the attachment of the 5S RNA into the large ribosomal subunit, where it forms part of the central protuberance. In the 70S ribosome it contacts protein S13 of the 30S subunit (bridge B1b), connecting the 2 subunits; this bridge is implicated in subunit movement. Contacts the P site tRNA; the 5S rRNA and some of its associated proteins might help stabilize positioning of ribosome-bound tRNAs. This chain is Large ribosomal subunit protein uL5, found in Albidiferax ferrireducens (strain ATCC BAA-621 / DSM 15236 / T118) (Rhodoferax ferrireducens).